Here is a 332-residue protein sequence, read N- to C-terminus: Glycerol-3-phosphate dehydrogenase [NAD(P)+] 2 (332 aa).

The NADPH site is built by Ser-17, Trp-18, Arg-37, and Lys-112. Residues Lys-112 and Gly-140 each coordinate sn-glycerol 3-phosphate. Ala-144 provides a ligand contact to NADPH. Residues Lys-195, Asp-243, Ser-253, Arg-254, and Asn-255 each contribute to the sn-glycerol 3-phosphate site. The active-site Proton acceptor is the Lys-195. Residue Arg-254 participates in NADPH binding. The NADPH site is built by Val-278 and Glu-280.

The protein belongs to the NAD-dependent glycerol-3-phosphate dehydrogenase family.

The protein resides in the cytoplasm. It catalyses the reaction sn-glycerol 3-phosphate + NAD(+) = dihydroxyacetone phosphate + NADH + H(+). It carries out the reaction sn-glycerol 3-phosphate + NADP(+) = dihydroxyacetone phosphate + NADPH + H(+). It functions in the pathway membrane lipid metabolism; glycerophospholipid metabolism. Catalyzes the reduction of the glycolytic intermediate dihydroxyacetone phosphate (DHAP) to sn-glycerol 3-phosphate (G3P), the key precursor for phospholipid synthesis. The polypeptide is Glycerol-3-phosphate dehydrogenase [NAD(P)+] 2 (Mycolicibacterium paratuberculosis (strain ATCC BAA-968 / K-10) (Mycobacterium paratuberculosis)).